We begin with the raw amino-acid sequence, 66 residues long: uncharacterized protein (66 aa).

This is an uncharacterized protein from Frog virus 3 (isolate Goorha) (FV-3).